Reading from the N-terminus, the 484-residue chain is Glutamate--tRNA ligase (484 aa).

The 'HIGH' region signature appears at 11 to 21 (PSPTGLLHIGN). The short motif at 255 to 259 (KLSKR) is the 'KMSKS' region element. Residue lysine 258 participates in ATP binding.

The protein belongs to the class-I aminoacyl-tRNA synthetase family. Glutamate--tRNA ligase type 1 subfamily. In terms of assembly, monomer.

Its subcellular location is the cytoplasm. It carries out the reaction tRNA(Glu) + L-glutamate + ATP = L-glutamyl-tRNA(Glu) + AMP + diphosphate. Catalyzes the attachment of glutamate to tRNA(Glu) in a two-step reaction: glutamate is first activated by ATP to form Glu-AMP and then transferred to the acceptor end of tRNA(Glu). This is Glutamate--tRNA ligase from Streptococcus suis (strain 98HAH33).